The sequence spans 251 residues: 14-3-3-like protein (251 aa).

This sequence belongs to the 14-3-3 family. In terms of tissue distribution, most abundant in roots and flowers.

In Nicotiana tabacum (Common tobacco), this protein is 14-3-3-like protein.